A 455-amino-acid chain; its full sequence is Ribulose bisphosphate carboxylase large chain (455 aa).

Lys-5 is modified (N6,N6,N6-trimethyllysine). Positions 114 and 164 each coordinate substrate. Lys-166 (proton acceptor) is an active-site residue. Lys-168 lines the substrate pocket. 3 residues coordinate Mg(2+): Lys-192, Asp-194, and Glu-195. N6-carboxylysine is present on Lys-192. His-285 acts as the Proton acceptor in catalysis. Substrate-binding residues include Arg-286, His-318, and Ser-370.

Belongs to the RuBisCO large chain family. Type I subfamily. As to quaternary structure, heterohexadecamer of 8 large chains and 8 small chains; disulfide-linked. The disulfide link is formed within the large subunit homodimers. Mg(2+) serves as cofactor. The disulfide bond which can form in the large chain dimeric partners within the hexadecamer appears to be associated with oxidative stress and protein turnover.

The protein localises to the plastid. The protein resides in the chloroplast. The catalysed reaction is 2 (2R)-3-phosphoglycerate + 2 H(+) = D-ribulose 1,5-bisphosphate + CO2 + H2O. The enzyme catalyses D-ribulose 1,5-bisphosphate + O2 = 2-phosphoglycolate + (2R)-3-phosphoglycerate + 2 H(+). In terms of biological role, ruBisCO catalyzes two reactions: the carboxylation of D-ribulose 1,5-bisphosphate, the primary event in carbon dioxide fixation, as well as the oxidative fragmentation of the pentose substrate in the photorespiration process. Both reactions occur simultaneously and in competition at the same active site. This is Ribulose bisphosphate carboxylase large chain from Lupinus latifolius (Broad-leaved lupine).